Reading from the N-terminus, the 675-residue chain is MRKERLEKGSWLGMLITLGVVYGDIGTSPLYVMNALINDAGPLKNATPDYVIGSVSLIFWTLMLITTVKYVLVALRADNHHEGGIFALYALVRHRAKWLIFVALIGGAALLADGTLTPAVTVTSAVEGLKGLPDLRAFSQYSWLVPLSVTLILVSLFTIQVLGTAVVGRSFGPMMLLWFIVIGGIGLLNISQAPAILRAFSPVYAIQVLFSPTNKMGIFILGSVFLATTGAEALYSDMGHVGKANIDATWPFVYAMLILNYLGQGAWMLTHSQGPAWRNVTNINPFYEMIPSGGRIAMIVLATVAAIIASQALITGSYTLVDEAVGLKFLPRMIIKHPSNVRSQIYIGAINWLLCLVTLSIVWLFQTSAHMEAAYGLAITLTMLMTTILLSQWVQMKGHRFWSLALLAGFGLLETLFLVASLTKFIHGGYLTLGLTLMIFLIMVVWFFGNRRRLRYNQADEQISLLNYRSQLIQLSQDDNQPLFATNLVYLAKVDQLHRVKRSILYSILDKRPKRAKVYWFITINETNRPYDCSYSVDMLGTRNVVEVRLNLGFRKSQHINRYLRAIVTSLIADHSIDPQYSNYGITQPRQVGDFKFVVQNQQIMDLAGNPTMHQFDRFLIGGRIFLQNITPSPAIWYGLEFSDVLEETIPLFTKPMTDPALVHLAKRQTTRHQV.

12 helical membrane-spanning segments follow: residues 12-32, 55-75, 98-118, 143-163, 170-190, 216-236, 249-269, 296-316, 345-365, 374-394, 401-421, and 428-448; these read LGML…PLYV, VSLI…LVAL, WLIF…TLTP, WLVP…QVLG, SFGP…LLNI, MGIF…ALYS, TWPF…AWML, IAMI…LITG, IYIG…VWLF, AYGL…SQWV, FWSL…LVAS, and GGYL…VWFF.

It belongs to the HAK/KUP transporter (TC 2.A.72) family.

It localises to the cell membrane. It carries out the reaction K(+)(in) + H(+)(in) = K(+)(out) + H(+)(out). Functionally, transport of potassium into the cell. Likely operates as a K(+):H(+) symporter. The polypeptide is Probable potassium transport system protein Kup (Levilactobacillus brevis (strain ATCC 367 / BCRC 12310 / CIP 105137 / JCM 1170 / LMG 11437 / NCIMB 947 / NCTC 947) (Lactobacillus brevis)).